A 165-amino-acid polypeptide reads, in one-letter code: Protein-export protein SecB (165 aa).

It belongs to the SecB family. In terms of assembly, homotetramer, a dimer of dimers. One homotetramer interacts with 1 SecA dimer.

It localises to the cytoplasm. Functionally, one of the proteins required for the normal export of preproteins out of the cell cytoplasm. It is a molecular chaperone that binds to a subset of precursor proteins, maintaining them in a translocation-competent state. It also specifically binds to its receptor SecA. This chain is Protein-export protein SecB, found in Marinobacter nauticus (strain ATCC 700491 / DSM 11845 / VT8) (Marinobacter aquaeolei).